Consider the following 189-residue polypeptide: MTVHIHPAVDQGVKQGSGSFAGGTLVCKCQDRPVKVGIKGDVAHNHACGCTKCWKPDGATFSVVAVVPRDNVTVLENGDKLHVVDASATIQRHACKVCGTHMYGRIENKSHPFYGLDFIHPELFQEGGSAAPEFAAFVSSVIESGVDPSEMPGIRARLKELGLEPYDCLSPGLMDAIATSVAKSQQKAA.

A CENP-V/GFA domain is found at 20–167 (FAGGTLVCKC…LKELGLEPYD (148 aa)). 7 residues coordinate Zn(2+): cysteine 27, cysteine 29, cysteine 48, cysteine 50, cysteine 53, cysteine 95, and cysteine 98.

It belongs to the Gfa family. Zn(2+) serves as cofactor.

The catalysed reaction is S-(hydroxymethyl)glutathione = glutathione + formaldehyde. It participates in one-carbon metabolism; formaldehyde degradation; formate from formaldehyde (glutathione route): step 1/3. In terms of biological role, catalyzes the condensation of formaldehyde and glutathione to S-hydroxymethylglutathione. This is Glutathione-dependent formaldehyde-activating enzyme from Rhodopseudomonas palustris (strain BisB18).